We begin with the raw amino-acid sequence, 374 residues long: Protein RecA (374 aa).

Position 66 to 73 (66 to 73 (GPESSGKT)) interacts with ATP. Residues 327–374 (LGVGVHPEESATEPGADAASAAPADAAPAVPAPTTAKATKSKAAAAKS) are disordered. A compositionally biased stretch (low complexity) spans 338–374 (TEPGADAASAAPADAAPAVPAPTTAKATKSKAAAAKS).

This sequence belongs to the RecA family.

The protein localises to the cytoplasm. Its function is as follows. Can catalyze the hydrolysis of ATP in the presence of single-stranded DNA, the ATP-dependent uptake of single-stranded DNA by duplex DNA, and the ATP-dependent hybridization of homologous single-stranded DNAs. It interacts with LexA causing its activation and leading to its autocatalytic cleavage. The polypeptide is Protein RecA (Streptomyces lividans).